Consider the following 857-residue polypeptide: Protein dalmatian (857 aa).

2 disordered regions span residues 1–50 (MVRT…KLSI) and 146–194 (VQKS…FFHR). 2 stretches are compositionally biased toward polar residues: residues 146–156 (VQKSTQPQNIK) and 165–176 (SPCQQRIRSKSP). Ser-173, Ser-175, Ser-184, and Ser-222 each carry phosphoserine. The segment covering 251–271 (GKPRAKRTAKKVRPVGNRRKV) has biased composition (basic residues). The disordered stretch occupies residues 251-281 (GKPRAKRTAKKVRPVGNRRKVSTKDNEPEPV). Residue Ser-405 is modified to Phosphoserine. Disordered stretches follow at residues 470-514 (SICP…NAEN) and 737-830 (PPRP…RDIE). Residues 771–781 (KQPRRTYVKER) show a composition bias toward basic and acidic residues. The span at 797-806 (SESEDEDEQD) shows a compositional bias: acidic residues. A compositionally biased stretch (basic and acidic residues) spans 807–816 (SHDKSLDSPE). Residues 817–826 (KKRHHVKRPR) are compositionally biased toward basic residues.

Its subcellular location is the nucleus. It is found in the chromosome. Regulator of sister chromatid cohesion in mitosis. Probably involved in development of the central nervous system. This Drosophila melanogaster (Fruit fly) protein is Protein dalmatian (dmt).